The sequence spans 345 residues: Heat stress transcription factor A-2 (345 aa).

Over residues 17–30 (GSVAASSSVGSSSS) the composition is skewed to low complexity. A disordered region spans residues 17 to 40 (GSVAASSSVGSSSSPRPMEGLNET). Residues 42-136 (PPPFLTKTYE…LLKNIKRRRN (95 aa)) mediate DNA binding. The interval 150 to 216 (SCVEVGQYGF…QMMTFLAKAL (67 aa)) is hydrophobic repeat HR-A/B. The short motif at 231 to 238 (EKKSLFGL) is the Nuclear localization signal element. Positions 273-282 (EMLFAAAIDD) match the AHA1 motif. Lys-315 participates in a covalent cross-link: Glycyl lysine isopeptide (Lys-Gly) (interchain with G-Cter in SUMO). Positions 324–333 (LDWDSQDLHD) match the AHA2 motif. The Nuclear export signal signature appears at 334-341 (MVDQMGFL).

This sequence belongs to the HSF family. Class A subfamily. As to quaternary structure, homotrimer. Interacts with SUMO1. Binds to HSBP. Post-translationally, exhibits temperature-dependent phosphorylation. Sumoylated at Lys-315. Sumoylation represses its function.

The protein localises to the cytoplasm. Its subcellular location is the nucleus. Its function is as follows. Transcriptional activator that specifically binds DNA sequence 5'-AGAAnnTTCT-3' known as heat shock promoter elements (HSE). Seems to be involved in other environmental stress responses. Activates ascorbate peroxidase 2 (APX2) in addition to several heat shock protein (HSPs). Binds to the promoter of SGIP1 and activates its expression in heat acclimated plants. Involved in the mechanisms necessary for quick response to heat and subsequent heritable transgenerational memory of heat acclimation (global warming) such as early flowering and attenuated immunity; this process includes epigenetic regulation as well as post-transcriptional gene silencing (PTGS). In response to heat, HSFA2 is activated and promotes the expression of REF6 which in turn derepresses HSFA2, thus establishing an inheritable feedback loop able to trigger SGIP1 and subsequent SGIP1-mediated SGS3 degradation; this prevents the biosynthesis of trans-acting siRNA (tasiRNA) and leads to the release of HTT5, which drives early flowering but attenuates immunity. This chain is Heat stress transcription factor A-2, found in Arabidopsis thaliana (Mouse-ear cress).